The following is a 276-amino-acid chain: Shikimate dehydrogenase (NADP(+)) (276 aa).

Residues 18–20 (SKS) and Thr-65 contribute to the shikimate site. The active-site Proton acceptor is Lys-69. Glu-81 provides a ligand contact to NADP(+). Shikimate contacts are provided by Asn-90 and Asp-106. Residues 130–134 (GAGGA), 154–159 (NRTSSK), and Met-217 contribute to the NADP(+) site. Tyr-219 is a binding site for shikimate. An NADP(+)-binding site is contributed by Gly-241.

It belongs to the shikimate dehydrogenase family. Homodimer.

The enzyme catalyses shikimate + NADP(+) = 3-dehydroshikimate + NADPH + H(+). It participates in metabolic intermediate biosynthesis; chorismate biosynthesis; chorismate from D-erythrose 4-phosphate and phosphoenolpyruvate: step 4/7. Its function is as follows. Involved in the biosynthesis of the chorismate, which leads to the biosynthesis of aromatic amino acids. Catalyzes the reversible NADPH linked reduction of 3-dehydroshikimate (DHSA) to yield shikimate (SA). The chain is Shikimate dehydrogenase (NADP(+)) from Vibrio atlanticus (strain LGP32) (Vibrio splendidus (strain Mel32)).